Reading from the N-terminus, the 156-residue chain is Ribosome maturation factor RimP (156 aa).

The protein belongs to the RimP family.

It localises to the cytoplasm. Its function is as follows. Required for maturation of 30S ribosomal subunits. This Lachnospira eligens (strain ATCC 27750 / DSM 3376 / VPI C15-48 / C15-B4) (Eubacterium eligens) protein is Ribosome maturation factor RimP.